Reading from the N-terminus, the 223-residue chain is Prolactin-3D4 (223 aa).

The N-terminal stretch at 1 to 28 is a signal peptide; it reads MQLTLTLSGSSMQLLLLVSNLLLWENMA. Intrachain disulfides connect C80-C198 and C215-C223. Residues N108 and N157 are each glycosylated (N-linked (GlcNAc...) asparagine).

It belongs to the somatotropin/prolactin family. N-glycosylated.

Its subcellular location is the secreted. The protein is Prolactin-3D4 (Prl3d4) of Rattus norvegicus (Rat).